The chain runs to 321 residues: Biotin synthase (321 aa).

Residues 44–273 (FCGNVFDLCT…DGFVRIAAGR (230 aa)) form the Radical SAM core domain. [4Fe-4S] cluster is bound by residues Cys62, Cys66, and Cys69. Residues Ser106, Cys138, Cys198, and Arg268 each contribute to the [2Fe-2S] cluster site.

Belongs to the radical SAM superfamily. Biotin synthase family. In terms of assembly, homodimer. The cofactor is [4Fe-4S] cluster. Requires [2Fe-2S] cluster as cofactor.

It carries out the reaction (4R,5S)-dethiobiotin + (sulfur carrier)-SH + 2 reduced [2Fe-2S]-[ferredoxin] + 2 S-adenosyl-L-methionine = (sulfur carrier)-H + biotin + 2 5'-deoxyadenosine + 2 L-methionine + 2 oxidized [2Fe-2S]-[ferredoxin]. It participates in cofactor biosynthesis; biotin biosynthesis; biotin from 7,8-diaminononanoate: step 2/2. Its function is as follows. Catalyzes the conversion of dethiobiotin (DTB) to biotin by the insertion of a sulfur atom into dethiobiotin via a radical-based mechanism. The polypeptide is Biotin synthase (Akkermansia muciniphila (strain ATCC BAA-835 / DSM 22959 / JCM 33894 / BCRC 81048 / CCUG 64013 / CIP 107961 / Muc)).